Here is a 202-residue protein sequence, read N- to C-terminus: GTP cyclohydrolase 1 (202 aa).

Zn(2+) contacts are provided by cysteine 90, histidine 93, and cysteine 163.

Belongs to the GTP cyclohydrolase I family. Homomer.

The enzyme catalyses GTP + H2O = 7,8-dihydroneopterin 3'-triphosphate + formate + H(+). Its pathway is cofactor biosynthesis; 7,8-dihydroneopterin triphosphate biosynthesis; 7,8-dihydroneopterin triphosphate from GTP: step 1/1. This is GTP cyclohydrolase 1 from Mycobacterium marinum (strain ATCC BAA-535 / M).